A 434-amino-acid polypeptide reads, in one-letter code: D-amino acid dehydrogenase (434 aa).

Position 3 to 17 (3 to 17) interacts with FAD; it reads VLVLGSGVIGTTSAW.

The protein belongs to the DadA oxidoreductase family. FAD serves as cofactor.

The catalysed reaction is a D-alpha-amino acid + A + H2O = a 2-oxocarboxylate + AH2 + NH4(+). It functions in the pathway amino-acid degradation; D-alanine degradation; NH(3) and pyruvate from D-alanine: step 1/1. Oxidative deamination of D-amino acids. The protein is D-amino acid dehydrogenase of Stenotrophomonas maltophilia (strain R551-3).